Consider the following 185-residue polypeptide: UPF0200 protein Mevan_0592 (185 aa).

8–15 is an ATP binding site; it reads GMPGSGKS.

This sequence belongs to the UPF0200 family.

The protein is UPF0200 protein Mevan_0592 of Methanococcus vannielii (strain ATCC 35089 / DSM 1224 / JCM 13029 / OCM 148 / SB).